The chain runs to 194 residues: Ribosomal RNA small subunit methyltransferase G (194 aa).

S-adenosyl-L-methionine is bound by residues Gly70, Tyr75, 121-122 (VE), and Arg135.

Belongs to the methyltransferase superfamily. RNA methyltransferase RsmG family.

Its subcellular location is the cytoplasm. The enzyme catalyses guanosine(527) in 16S rRNA + S-adenosyl-L-methionine = N(7)-methylguanosine(527) in 16S rRNA + S-adenosyl-L-homocysteine. Specifically methylates the N7 position of guanine in position 527 of 16S rRNA. This is Ribosomal RNA small subunit methyltransferase G from Aliarcobacter butzleri (strain RM4018) (Arcobacter butzleri).